We begin with the raw amino-acid sequence, 562 residues long: 2-hydroxyisobutanoyl-CoA mutase large subunit (562 aa).

(3S)-3-hydroxybutanoyl-CoA-binding positions include 76 to 79 (YPTM), 86 to 88 (TMR), D117, 196 to 198 (TVQ), R235, N240, H245, and R284.

Belongs to the acyl-CoA mutase large subunit family. Homotetramer composed of two large substrate-binding subunits (HcmA) and two small cobalamin-binding subunits (HcmB).

The enzyme catalyses 2-hydroxyisobutanoyl-CoA = (3S)-3-hydroxybutanoyl-CoA. In terms of biological role, together with HcmB, catalyzes the isomerization of 2-hydroxyisobutyryl-CoA and 3-hydroxybutyryl-CoA. Is specific for 2-hydroxyisobutyryl-CoA and (S)-3-hydroxybutyryl-CoA, and shows only very low activity with (R)-3-hydroxybutyryl-CoA, isobutyryl-CoA and butyryl-CoA. In vitro, can isomerize pivalyl-CoA and isovaleryl-CoA, with much lower efficiency. Plays a central role in the degradation of substrates bearing a tert-butyl moiety, such as the fuel oxygenate methyl tert-butyl ether (MTBE) and its metabolites. The sequence is that of 2-hydroxyisobutanoyl-CoA mutase large subunit from Aquincola tertiaricarbonis.